The chain runs to 838 residues: Tape measure protein (838 aa).

The tract at residues 378–397 (ARANEENASREAAAESDRQK) is disordered. Basic and acidic residues predominate over residues 380–397 (ANEENASREAAAESDRQK). A coiled-coil region spans residues 399 to 419 (AAQAQANYAKTQTALEKYTAR).

This sequence belongs to the Lambdavirus tape measure protein family. Interacts with the tail initiator complex presumably through its C-terminus domain. Interacts with the tail assembly proteins.

Its subcellular location is the virion. Its function is as follows. Serves as a ruler that controls the length of tail by stopping the tail tube polymerization and is probably released from the tail shaft during infection to facilitate DNA translocation into the host cell. Assembles into a multimeric linear form probably arranged as a coil of alpha-helices and stabilized by the covering tail assembly proteins. Its C-terminus fixes the tail tip complex, thereby forming the tail assembly initiator complex. Tail tube proteins polymerize around the tape measure protein, displacing the tail assembly proteins. When the tail reaches the length specified by the tape measure protein, it stops and becomes capped by the tail terminator protein. The chain is Tape measure protein from Escherichia coli (Bacteriophage N15).